Consider the following 877-residue polypeptide: Dynamin (877 aa).

The Dynamin-type G domain occupies 23–289 (QLDLPQIAVV…LTNHIRDTLP (267 aa)). The segment at 33 to 40 (GGQSAGKS) is G1 motif. A GTP-binding site is contributed by 33–41 (GGQSAGKSS). The segment at 59-61 (VTR) is G2 motif. The segment at 131–134 (DLPG) is G3 motif. The G4 motif stretch occupies residues 200–203 (TKLD). GTP contacts are provided by residues 200-206 (TKLDLMD) and 231-234 (NRSQ). The tract at residues 230-233 (VNRS) is G5 motif. The PH domain maps to 513-621 (QVIRKGHMVI…WKASFLRAGV (109 aa)). 2 disordered regions span residues 623–648 (PEKQETQENGDESASEESSSDPQLER) and 740–834 (TVSS…SGAV). Residues 630–641 (ENGDESASEESS) show a composition bias toward acidic residues. The region spanning 650–741 (VETIRNLVDS…IIGDVSMATV (92 aa)) is the GED domain. Residues Ser-756, Ser-764, and Ser-767 each carry the phosphoserine modification. The segment covering 788-826 (PPLPPSTGRPAPAIPNRPGGGAPPLPGGRPGGSLPPPML) has biased composition (pro residues).

Belongs to the TRAFAC class dynamin-like GTPase superfamily. Dynamin/Fzo/YdjA family.

The protein resides in the cytoplasm. It is found in the cytoskeleton. It carries out the reaction GTP + H2O = GDP + phosphate + H(+). Microtubule-associated force-producing protein which is involved in the production of microtubule bundles and which is able to bind and hydrolyze GTP. Implicated in endocytic protein sorting. The protein is Dynamin (shi) of Drosophila melanogaster (Fruit fly).